Reading from the N-terminus, the 415-residue chain is Gamma-glutamyl phosphate reductase (415 aa).

Belongs to the gamma-glutamyl phosphate reductase family.

It is found in the cytoplasm. It carries out the reaction L-glutamate 5-semialdehyde + phosphate + NADP(+) = L-glutamyl 5-phosphate + NADPH + H(+). The protein operates within amino-acid biosynthesis; L-proline biosynthesis; L-glutamate 5-semialdehyde from L-glutamate: step 2/2. In terms of biological role, catalyzes the NADPH-dependent reduction of L-glutamate 5-phosphate into L-glutamate 5-semialdehyde and phosphate. The product spontaneously undergoes cyclization to form 1-pyrroline-5-carboxylate. The polypeptide is Gamma-glutamyl phosphate reductase (Bacillus cereus (strain B4264)).